The following is a 366-amino-acid chain: Galactoside alpha-(1,2)-fucosyltransferase 1 (366 aa).

Over 1 to 8 (MWPLSHRH) the chain is Cytoplasmic. Residues 9–25 (LCLAFLLVCVLSAISFF) traverse the membrane as a helical; Signal-anchor for type II membrane protein segment. Over 26-366 (LHIHQDSFPH…LSPLWTLAEP (341 aa)) the chain is Lumenal. Asn-66, Asn-302, and Asn-328 each carry an N-linked (GlcNAc...) asparagine glycan.

This sequence belongs to the glycosyltransferase 11 family.

The protein resides in the golgi apparatus. It is found in the golgi stack membrane. It catalyses the reaction a beta-D-galactosyl-(1-&gt;4)-N-acetyl-beta-D-glucosaminyl derivative + GDP-beta-L-fucose = an alpha-L-Fuc-(1-&gt;2)-beta-D-Gal-(1-&gt;4)-beta-D-GlcNAc derivative + GDP + H(+). The catalysed reaction is a ganglioside GA1 + GDP-beta-L-fucose = a ganglioside Fuc-GA1 + GDP + H(+). It carries out the reaction a beta-D-Gal-(1-&gt;3)-beta-D-GlcNAc-(1-&gt;3)-beta-D-Gal-(1-&gt;4)-beta-D-Glc-(1&lt;-&gt;1')-Cer(d18:1(4E)) + GDP-beta-L-fucose = alpha-L-fucosyl-(1-&gt;2)- beta-D-galactosyl-(1-&gt;3)-N-acetyl-beta-D-glucosaminyl-(1-&gt;3)-beta-D-galactosyl-(1-&gt;4)-beta-D-glucosyl-(1&lt;-&gt;1')-N-acylsphing-4-enine + GDP + H(+). The enzyme catalyses a neolactoside nLc4Cer(d18:1(4E)) + GDP-beta-L-fucose = a neolactoside IV(2)-alpha-Fuc-nLc4Cer(d18:1(4E)) + GDP + H(+). It catalyses the reaction a ganglioside GM1 + GDP-beta-L-fucose = a ganglioside Fuc-GM1 + GDP + H(+). The catalysed reaction is beta-D-galactosyl-(1-&gt;3)-N-acetyl-D-galactosamine + GDP-beta-L-fucose = alpha-L-fucosyl-(1-&gt;2)-beta-D-galactosyl-(1-&gt;3)-N-acetyl-D-galactosamine + GDP + H(+). The protein operates within protein modification; protein glycosylation. Functionally, catalyzes the transfer of L-fucose, from a guanosine diphosphate-beta-L-fucose, to the terminal galactose residue of glycoconjugates through an alpha(1,2) linkage leading to H antigen synthesis that is an intermediate substrate in the synthesis of ABO blood group antigens. H antigen is essential for maturation of the glomerular layer of the main olfactory bulb, in cell migration and early cell-cell contacts during tumor associated angiogenesis. Preferentially fucosylates soluble lactose and to a lesser extent fucosylates glycolipids gangliosides GA1 and GM1a. The sequence is that of Galactoside alpha-(1,2)-fucosyltransferase 1 from Lagothrix lagotricha (Brown woolly monkey).